Reading from the N-terminus, the 208-residue chain is Probable GTP-binding protein EngB (208 aa).

The EngB-type G domain maps to 23-205 (LTSEMVILGR…RQTLLKYLLT (183 aa)). Residues 31–38 (GRSNVGKS), 57–61 (GKTRL), 84–87 (DLPG), 154–157 (TKFD), and 182–184 (FNA) contribute to the GTP site. Mg(2+) contacts are provided by S38 and T59.

It belongs to the TRAFAC class TrmE-Era-EngA-EngB-Septin-like GTPase superfamily. EngB GTPase family. Mg(2+) serves as cofactor.

Its function is as follows. Necessary for normal cell division and for the maintenance of normal septation. The chain is Probable GTP-binding protein EngB from Helicobacter pylori (strain HPAG1).